Consider the following 502-residue polypeptide: Probable cytosol aminopeptidase 2 (502 aa).

Mn(2+) contacts are provided by lysine 269 and aspartate 274. Lysine 281 is an active-site residue. Aspartate 292, aspartate 351, and glutamate 353 together coordinate Mn(2+). Residue arginine 355 is part of the active site.

It belongs to the peptidase M17 family. It depends on Mn(2+) as a cofactor.

It localises to the cytoplasm. The enzyme catalyses Release of an N-terminal amino acid, Xaa-|-Yaa-, in which Xaa is preferably Leu, but may be other amino acids including Pro although not Arg or Lys, and Yaa may be Pro. Amino acid amides and methyl esters are also readily hydrolyzed, but rates on arylamides are exceedingly low.. The catalysed reaction is Release of an N-terminal amino acid, preferentially leucine, but not glutamic or aspartic acids.. Its function is as follows. Presumably involved in the processing and regular turnover of intracellular proteins. Catalyzes the removal of unsubstituted N-terminal amino acids from various peptides. The protein is Probable cytosol aminopeptidase 2 (pepA2) of Shewanella oneidensis (strain ATCC 700550 / JCM 31522 / CIP 106686 / LMG 19005 / NCIMB 14063 / MR-1).